An 85-amino-acid chain; its full sequence is Large ribosomal subunit protein bL31B (85 aa).

The protein belongs to the bacterial ribosomal protein bL31 family. Type B subfamily. Part of the 50S ribosomal subunit.

In Pseudomonas entomophila (strain L48), this protein is Large ribosomal subunit protein bL31B.